We begin with the raw amino-acid sequence, 214 residues long: Large ribosomal subunit protein uL4 (214 aa).

A disordered region spans residues 56 to 86 (THKVKNRAEVSGTGKKPWKQKSTGKARAGSK). The segment covering 71-85 (KPWKQKSTGKARAGS) has biased composition (basic residues).

It belongs to the universal ribosomal protein uL4 family. Part of the 50S ribosomal subunit.

Functionally, one of the primary rRNA binding proteins, this protein initially binds near the 5'-end of the 23S rRNA. It is important during the early stages of 50S assembly. It makes multiple contacts with different domains of the 23S rRNA in the assembled 50S subunit and ribosome. In terms of biological role, forms part of the polypeptide exit tunnel. The protein is Large ribosomal subunit protein uL4 of Mesomycoplasma hyopneumoniae (strain 232) (Mycoplasma hyopneumoniae).